A 357-amino-acid polypeptide reads, in one-letter code: Hyaluronidase (357 aa).

The N-terminal stretch at 1-26 (MLLVTLFLFFLQALVNGDSCGSNCEK) is a signal peptide. 2 cysteine pairs are disulfide-bonded: cysteine 45–cysteine 334 and cysteine 211–cysteine 223. N-linked (GlcNAc...) asparagine glycosylation is found at asparagine 105 and asparagine 125. Glutamate 135 (proton donor) is an active-site residue. Asparagine 153 is a glycosylation site (N-linked (GlcNAc...) asparagine). Asparagine 351 carries an N-linked (GlcNAc...) asparagine glycan.

It belongs to the glycosyl hydrolase 56 family.

Its subcellular location is the secreted. The enzyme catalyses Random hydrolysis of (1-&gt;4)-linkages between N-acetyl-beta-D-glucosamine and D-glucuronate residues in hyaluronate.. Its function is as follows. Hydrolyzes high molecular weight hyaluronic acid to produce small oligosaccharides. The sequence is that of Hyaluronidase from Vespa magnifica (Hornet).